Here is a 394-residue protein sequence, read N- to C-terminus: Chalcone synthase 8 (394 aa).

Cysteine 165 is an active-site residue.

The protein belongs to the thiolase-like superfamily. Chalcone/stilbene synthases family.

It carries out the reaction (E)-4-coumaroyl-CoA + 3 malonyl-CoA + 3 H(+) = 2',4,4',6'-tetrahydroxychalcone + 3 CO2 + 4 CoA. The protein operates within secondary metabolite biosynthesis; flavonoid biosynthesis. Functionally, the primary product of this enzyme is 4,2',4',6'-tetrahydroxychalcone (also termed naringenin-chalcone or chalcone) which can under specific conditions spontaneously isomerize into naringenin. The polypeptide is Chalcone synthase 8 (CHS8) (Bromheadia finlaysoniana (Orchid)).